We begin with the raw amino-acid sequence, 160 residues long: MATFEGRFSDAAGLRVGIVVARFNDLVTAKLLSGCLDCLKRHGVDVSETSSQLDVAWVPGSFELPIVAQQMARCGQYQVLITLGAVIRGDTPHFDVVVAEASKGVAAVARDTSVPVIFGVLTTDTMQQALERAGIKSNLGWSYGLEALEMGSLMRALPSA.

Residues F23, 61-63 (SFE), and 85-87 (AVI) contribute to the 5-amino-6-(D-ribitylamino)uracil site. A (2S)-2-hydroxy-3-oxobutyl phosphate-binding site is contributed by 90–91 (DT). H93 (proton donor) is an active-site residue. F118 is a binding site for 5-amino-6-(D-ribitylamino)uracil. R132 is a (2S)-2-hydroxy-3-oxobutyl phosphate binding site.

This sequence belongs to the DMRL synthase family.

The enzyme catalyses (2S)-2-hydroxy-3-oxobutyl phosphate + 5-amino-6-(D-ribitylamino)uracil = 6,7-dimethyl-8-(1-D-ribityl)lumazine + phosphate + 2 H2O + H(+). It participates in cofactor biosynthesis; riboflavin biosynthesis; riboflavin from 2-hydroxy-3-oxobutyl phosphate and 5-amino-6-(D-ribitylamino)uracil: step 1/2. Its function is as follows. Catalyzes the formation of 6,7-dimethyl-8-ribityllumazine by condensation of 5-amino-6-(D-ribitylamino)uracil with 3,4-dihydroxy-2-butanone 4-phosphate. This is the penultimate step in the biosynthesis of riboflavin. This chain is 6,7-dimethyl-8-ribityllumazine synthase, found in Synechococcus sp. (strain CC9605).